The following is a 376-amino-acid chain: MEKLKQQFSKDRLITPSSNLVRNYIDSIPVDLLIDILSRFPPKSIARFYCVSKLWESILRGPDFTELYLTKSVALRRLFFALKVNTELLVFSSPQPQIPDENSSLVVEATPYKCFPKKIPTEICTALGGLVFLGTFLSRQPLVIVNPLTGEFITLPKLKTIGTKRFSFGYDPISKKFKVLCVTWSPCGTLPNIHQVLTLETGERLWRTIHDPVIPRYSINYDAICINGVLYSEAYYQGSSKIVCFDFKIEKVSFVNIDGMCNLRLFNCKGKLGVHQYDVQSRNEKLVFHVLEDAEKHKWSKSICILPSVVSGKRIVEITCTGEIVFSPSGGSLHPFYIFFYNIERKTYTRVQIKGFKKYADCVHTFLDFVEDTKLI.

The F-box domain occupies arginine 22–lysine 71.

This is Putative F-box protein At1g53370 from Arabidopsis thaliana (Mouse-ear cress).